A 604-amino-acid chain; its full sequence is Putative O-acetyltransferase SACOL0978 (604 aa).

The next 11 helical transmembrane spans lie at 15 to 35 (YIPG…IYHL), 43 to 63 (GFLG…SLLL), 85 to 105 (LLPA…LLKS), 150 to 170 (AIEE…LLTI), 176 to 196 (IGFI…FIYS), 212 to 232 (LQTL…KLKN), 240 to 260 (YVID…FFII), 267 to 287 (IYDG…ASVV), 310 to 330 (YSLY…YVDG), 332 to 352 (IPVY…ELSY), and 377 to 397 (FIRM…LVGA). Active-site residues include Ser-459, Asp-581, and His-584.

Belongs to the acyltransferase 3 family.

It localises to the cell membrane. This chain is Putative O-acetyltransferase SACOL0978, found in Staphylococcus aureus (strain COL).